A 231-amino-acid chain; its full sequence is Caspase-like protein (231 aa).

This sequence belongs to the peptidase C14A family.

In Trichoplusia ni ascovirus 2c (TnAV-2c), this protein is Caspase-like protein.